The sequence spans 1344 residues: Regulatory-associated protein of TOR 1 (1344 aa).

A compositionally biased stretch (basic and acidic residues) spans 28–44 (CVSSHDDGDSRRKDSEA). 2 disordered regions span residues 28–56 (CVSSHDDGDSRRKDSEAKSSSSYGNGTTE) and 771–818 (ASTD…DSVS). Positions 785 to 816 (SSSPLGSSGLMQGSPLSDDSSLHSDSGMMHDS) are enriched in low complexity. WD repeat units lie at residues 1025-1064 (RFETGTKTALLHPFSPIVVAADENERIRVWNYEEATLLNG), 1070-1111 (FPDK…GKQK), 1125-1164 (GARDLNAVVDWQQQSGYLYASGETSTVTLWDLEKEQLVRS), 1168-1208 (ESEC…PLVC), 1214-1255 (QKVE…DTYL), 1259-1298 (AHRGSLTALAVHRHAPIIASGSAKQLIKVFSLQGEQLGII), and 1307-1344 (QKIGSVSCLTFHPYQVLLAAGAADSFVSIYTHDNSQAR).

The protein belongs to the WD repeat RAPTOR family. Interacts with TOR, ATPK1 and ML1. Interacts with KIN10. In terms of processing, phosphorylated by KIN10. In terms of tissue distribution, expressed in roots, leaves, flowers and seeds.

It is found in the cytoplasm. In terms of biological role, probable component of the plant TOR kinase pathway that recruits substrates for TOR. Modulates plant cell growth and regulates the activity of ATPK1 kinase in response to osmotic stress. In Arabidopsis thaliana (Mouse-ear cress), this protein is Regulatory-associated protein of TOR 1 (RAPTOR1).